The chain runs to 470 residues: Argininosuccinate lyase (470 aa).

The protein belongs to the lyase 1 family. Argininosuccinate lyase subfamily.

It is found in the cytoplasm. The enzyme catalyses 2-(N(omega)-L-arginino)succinate = fumarate + L-arginine. It functions in the pathway amino-acid biosynthesis; L-arginine biosynthesis; L-arginine from L-ornithine and carbamoyl phosphate: step 3/3. The protein is Argininosuccinate lyase of Leptospira borgpetersenii serovar Hardjo-bovis (strain L550).